The following is a 385-amino-acid chain: POU domain, class 3, transcription factor 2-B (385 aa).

Disordered regions lie at residues 106–136 (LVHP…SSNG), 149–209 (NGMI…TPTS), and 351–385 (EKRM…TSVQ). A compositionally biased stretch (polar residues) spans 122–136 (STGSTHLSSMASSNG). The span at 165-178 (LRDSHDDHHGDHGH) shows a compositional bias: basic and acidic residues. The span at 179–196 (QQPSQTQQQQQQHSQLQG) shows a compositional bias: low complexity. The POU-specific domain occupies 204-278 (EDTPTSDDLE…LLNKWLEEAD (75 aa)). Positions 296–355 (KRKKRTSIEVSVKGALESHFLKCPKPAAQEITSLADSLQLEKEVVRVWFCNRRQKEKRMT) form a DNA-binding region, homeobox.

Belongs to the POU transcription factor family. Class-3 subfamily. In terms of tissue distribution, expressed in the developing brain and spinal cord. Also found in a restricted region of the auditory vesicle during development. In the adult, expression is restricted to the brain.

The protein resides in the nucleus. In terms of biological role, transcription factor that may be implicated in patterning of the central nervous system during early development. The polypeptide is POU domain, class 3, transcription factor 2-B (pou3f2-b) (Xenopus laevis (African clawed frog)).